An 892-amino-acid chain; its full sequence is Putative VWFA domain-containing protein ORF892 (892 aa).

The disordered stretch occupies residues 109–548 (EEQLQRRPQR…RGYAHGDEDL (440 aa)). A compositionally biased stretch (polar residues) spans 129 to 142 (SEVANQRVSRSAEN). Over residues 143-162 (QGKRGNEEKQQQKTPGKTEE) the composition is skewed to basic and acidic residues. Positions 169 to 184 (ESGEEGNQQEESGEEQ) are enriched in acidic residues. Positions 185 to 196 (EGVKGSRSKQRE) are enriched in basic and acidic residues. A compositionally biased stretch (acidic residues) spans 212–223 (ESGESESEEGQS). Low complexity-rich tracts occupy residues 224–238 (SEET…GNQQ) and 271–283 (GNGQ…AQNG). Over residues 287–300 (GESEGEITESESAS) the composition is skewed to acidic residues. The segment covering 301–323 (EEQTGSKGKSGQQGEEGQQQSGS) has biased composition (low complexity). Composition is skewed to acidic residues over residues 324–336 (EGEE…ESGE) and 425–448 (SESE…ETEE). Residues 453-466 (SEAEGTAAEGEVGQ) show a composition bias toward low complexity. Polar residues-rich tracts occupy residues 467-481 (PSEQ…SGQR) and 512-531 (QTGS…QQGE). Residues 536 to 546 (EGGRGYAHGDE) show a composition bias toward basic and acidic residues. Residues 553–620 (QEINSILQTL…VQKLLKDLNV (68 aa)) are a coiled coil. The VWFA domain occupies 723–892 (DFLFVIDSSG…GNIVLKRLVH (170 aa)).

This Acidianus two-tailed virus (ATV) protein is Putative VWFA domain-containing protein ORF892.